Consider the following 138-residue polypeptide: ATP synthase epsilon chain (138 aa).

It belongs to the ATPase epsilon chain family. In terms of assembly, F-type ATPases have 2 components, CF(1) - the catalytic core - and CF(0) - the membrane proton channel. CF(1) has five subunits: alpha(3), beta(3), gamma(1), delta(1), epsilon(1). CF(0) has three main subunits: a, b and c.

The protein resides in the cell inner membrane. Produces ATP from ADP in the presence of a proton gradient across the membrane. The sequence is that of ATP synthase epsilon chain from Psychrobacter arcticus (strain DSM 17307 / VKM B-2377 / 273-4).